We begin with the raw amino-acid sequence, 136 residues long: uncharacterized protein (136 aa).

The disordered stretch occupies residues 1–100; it reads MQSREPSGWR…PCSGGPDRPE (100 aa). Positions 66–75 are enriched in basic residues; it reads RLLRWHHRVP.

This is an uncharacterized protein from Homo sapiens (Human).